We begin with the raw amino-acid sequence, 94 residues long: Co-chaperonin GroES (94 aa).

This sequence belongs to the GroES chaperonin family. As to quaternary structure, heptamer of 7 subunits arranged in a ring. Interacts with the chaperonin GroEL.

Its subcellular location is the cytoplasm. Together with the chaperonin GroEL, plays an essential role in assisting protein folding. The GroEL-GroES system forms a nano-cage that allows encapsulation of the non-native substrate proteins and provides a physical environment optimized to promote and accelerate protein folding. GroES binds to the apical surface of the GroEL ring, thereby capping the opening of the GroEL channel. The chain is Co-chaperonin GroES from Staphylococcus epidermidis.